The primary structure comprises 352 residues: Protein RecA (352 aa).

65 to 72 provides a ligand contact to ATP; it reads GPESSGKT.

This sequence belongs to the RecA family.

Its subcellular location is the cytoplasm. Functionally, can catalyze the hydrolysis of ATP in the presence of single-stranded DNA, the ATP-dependent uptake of single-stranded DNA by duplex DNA, and the ATP-dependent hybridization of homologous single-stranded DNAs. It interacts with LexA causing its activation and leading to its autocatalytic cleavage. Plays a functional role in the DNA rearrangement associated with the phenotypic switching from a pathogenic smooth to a nonpathogenic rough form in this bacterium. The protein is Protein RecA of Pseudomonas tolaasii.